A 352-amino-acid chain; its full sequence is tRNA pseudouridine synthase D (352 aa).

Asp-81 (nucleophile) is an active-site residue. The TRUD domain occupies 157-303; it reads GVPNYFGTQR…MDHERRILRL (147 aa).

It belongs to the pseudouridine synthase TruD family.

It catalyses the reaction uridine(13) in tRNA = pseudouridine(13) in tRNA. Its function is as follows. Responsible for synthesis of pseudouridine from uracil-13 in transfer RNAs. The protein is tRNA pseudouridine synthase D of Pseudomonas putida (strain GB-1).